The primary structure comprises 365 residues: Chorismate synthase (365 aa).

Arginine 46 is a binding site for NADP(+). FMN contacts are provided by residues 123–125, 241–242, glycine 281, 296–300, and arginine 322; these read RSS, NG, and KPTPS.

Belongs to the chorismate synthase family. Homotetramer. The cofactor is FMNH2.

It catalyses the reaction 5-O-(1-carboxyvinyl)-3-phosphoshikimate = chorismate + phosphate. It functions in the pathway metabolic intermediate biosynthesis; chorismate biosynthesis; chorismate from D-erythrose 4-phosphate and phosphoenolpyruvate: step 7/7. Catalyzes the anti-1,4-elimination of the C-3 phosphate and the C-6 proR hydrogen from 5-enolpyruvylshikimate-3-phosphate (EPSP) to yield chorismate, which is the branch point compound that serves as the starting substrate for the three terminal pathways of aromatic amino acid biosynthesis. This reaction introduces a second double bond into the aromatic ring system. In Helicobacter pylori (strain ATCC 700392 / 26695) (Campylobacter pylori), this protein is Chorismate synthase.